The chain runs to 634 residues: Chaperone protein HtpG (634 aa).

Positions 1–342 (MTVETQKETL…SNDLSLNVSR (342 aa)) are a; substrate-binding. Residues 343–559 (EILQKDPIID…EQDLGLQMRQ (217 aa)) are b. Residues 560 to 634 (ILEASGQKVP…LNKLLVELSA (75 aa)) form a c region.

It belongs to the heat shock protein 90 family. In terms of assembly, homodimer.

It localises to the cytoplasm. In terms of biological role, molecular chaperone. Has ATPase activity. The protein is Chaperone protein HtpG of Pseudomonas putida (strain ATCC 47054 / DSM 6125 / CFBP 8728 / NCIMB 11950 / KT2440).